The sequence spans 629 residues: tRNA uridine 5-carboxymethylaminomethyl modification enzyme MnmG (629 aa).

FAD is bound at residue glycine 4–glycine 9. Glycine 268–phenylalanine 282 contacts NAD(+).

Belongs to the MnmG family. As to quaternary structure, homodimer. Heterotetramer of two MnmE and two MnmG subunits. Requires FAD as cofactor.

The protein resides in the cytoplasm. Functionally, NAD-binding protein involved in the addition of a carboxymethylaminomethyl (cmnm) group at the wobble position (U34) of certain tRNAs, forming tRNA-cmnm(5)s(2)U34. This Helicobacter hepaticus (strain ATCC 51449 / 3B1) protein is tRNA uridine 5-carboxymethylaminomethyl modification enzyme MnmG.